Consider the following 469-residue polypeptide: MSKQQIGVIGLAVMGKNLALNIESRGFSVSVYNRSSSKTEEFLQEAKGKNVVGTYSIEEFVQSLETPRKILLMVKAGTATDATIQSLLPHLEKDDILIDGGNTYYKDTQRRNKELAESGIHFIGTGVSGGEEGALKGPSIMPGGQKEAHELVKPILEAISAKVDGEPCTTYIGPDGAGHYVKMVHNGIEYGDMQLISESYFILKQVLGLSADELHEVFAEWNKGELDSYLIEITADIFTKKDEETGKPLVDVILDKAGQKGTGKWTSQSALDLGVPLPIITESVFARFISAMKEERVKASGLLSGPEVKPVTENKEELIEAVRKALFMSKICSYAQGFAQMKAASEEYNWDLKYGEIAMIFRGGCIIRAAFLQKIKEAYDREPELDNLLLDSYFKNIVESYQGALRQVISLAVAQGVPVPSFSSALAYYDSYRTAVLPANLIQAQRDYFGAHTYERTDKEGIFHTEWMK.

NADP(+) contacts are provided by residues 10-15 (GLAVMG), 33-35 (NRS), 74-76 (VKA), and Asn-102. Residues Asn-102 and 128 to 130 (SGG) each bind substrate. The active-site Proton acceptor is the Lys-182. 185 to 186 (HN) serves as a coordination point for substrate. Glu-189 acts as the Proton donor in catalysis. The substrate site is built by Tyr-190, Lys-260, Arg-287, Arg-446, and His-452.

This sequence belongs to the 6-phosphogluconate dehydrogenase family. As to quaternary structure, homodimer.

The enzyme catalyses 6-phospho-D-gluconate + NADP(+) = D-ribulose 5-phosphate + CO2 + NADPH. It functions in the pathway carbohydrate degradation; pentose phosphate pathway; D-ribulose 5-phosphate from D-glucose 6-phosphate (oxidative stage): step 3/3. Functionally, catalyzes the oxidative decarboxylation of 6-phosphogluconate to ribulose 5-phosphate and CO(2), with concomitant reduction of NADP to NADPH. Is the predominant 6-P-gluconate dehydrogenase isoenzyme in B.subtilis during growth on glucose and gluconate. The protein is 6-phosphogluconate dehydrogenase, NADP(+)-dependent, decarboxylating (gndA) of Bacillus subtilis (strain 168).